The primary structure comprises 278 residues: Nucleotide-binding protein Tlet_0523 (278 aa).

9 to 16 (GLSGAGKS) lines the ATP pocket. Position 58-61 (58-61 (DIRS)) interacts with GTP.

The protein belongs to the RapZ-like family.

Functionally, displays ATPase and GTPase activities. The polypeptide is Nucleotide-binding protein Tlet_0523 (Pseudothermotoga lettingae (strain ATCC BAA-301 / DSM 14385 / NBRC 107922 / TMO) (Thermotoga lettingae)).